Here is an 804-residue protein sequence, read N- to C-terminus: Leucine--tRNA ligase (804 aa).

The short motif at 40 to 51 (PYPSGAGLHVGH) is the 'HIGH' region element. Positions 576 to 580 (KMSKS) match the 'KMSKS' region motif. Lysine 579 lines the ATP pocket.

The protein belongs to the class-I aminoacyl-tRNA synthetase family.

Its subcellular location is the cytoplasm. The enzyme catalyses tRNA(Leu) + L-leucine + ATP = L-leucyl-tRNA(Leu) + AMP + diphosphate. This Bacillus subtilis (strain 168) protein is Leucine--tRNA ligase.